The chain runs to 451 residues: MASSDSSYSRKFLLITFLPLSLACLAFLLQWRSGVNDSVTQWFDDNYPFPGMATVSEKRSLRSDSSCVSLLGQSRTQAFPYLRDLKLDHKPDLKPRICITTSTSAGLEQTLPWIFYHKVIGVETFYLFVEGTAASPNVSRVLETIPGVNVIYRTRELEEEQAKSRIWNETWLEKFFYKPCNYELFVKQNLNMEMAITMARDAGMDWILHLDTDELVHPSGTREYSLRNLLRDVPADVDEVIFTNYESSVERDDIKEPFTEVSMFKKNFKHLPREVYYGNYKEATRGNPNYFLTYANGKSAARIQDHLRPNGAHRWHNYKTYPNIKELDEAAILHYTYSKFSDLTSRRDRCGCKPTKKDVKRCFMLDFDRAAFIIASTSTSEEMLQWYRERVVWTDDNLILKLLRKGILTRIYAPMVIIQELREAGVFSSVVTSAHMSLSKNRSNSSTSSNY.

The signal sequence occupies residues 1–23; that stretch reads MASSDSSYSRKFLLITFLPLSLA. Residues N36, N137, N168, N441, and N444 are each glycosylated (N-linked (GlcNAc...) asparagine). Residues 109–345 form the GT92 domain; that stretch reads QTLPWIFYHK…TYSKFSDLTS (237 aa).

This sequence belongs to the glycosyltransferase 92 family.

Its subcellular location is the secreted. The protein localises to the cell wall. It is found in the cytoplasm. The protein resides in the cell membrane. Functionally, involved in the coordination between cell elongation and cellulose synthesis by promoting the expression of genes involved in cell elongation and cellulose synthesis. Acts as a regulator of plasmodesmatal permeability. Maybe a glycosyltransferase. The chain is Glycosyltransferase-like At2g41451 from Arabidopsis thaliana (Mouse-ear cress).